We begin with the raw amino-acid sequence, 212 residues long: Ras-related protein Rab-2A (212 aa).

The GTP site is built by Gly-16, Val-17, Gly-18, Lys-19, Ser-20, Cys-21, and Thr-38. Ser-20 provides a ligand contact to Mg(2+). The Switch 1 signature appears at 37–42; it reads LTIGVE. Residues Thr-38 and Asp-61 each coordinate Mg(2+). Positions 63–72 match the Switch 2 motif; that stretch reads AGQESFRSIT. The GTP site is built by Gly-64, Asn-119, Lys-120, Asp-122, Ala-150, and Lys-151. Residues Cys-211 and Cys-212 are each lipidated (S-geranylgeranyl cysteine).

This sequence belongs to the small GTPase superfamily. Rab family. In terms of assembly, interacts with PRKCI. Interacts with TRIP11. Interacts (in GTP-bound form) with GARIN1B. The cofactor is Mg(2+). In terms of processing, prenylated. Prenylation is required for association with cellular membranes.

The protein localises to the endoplasmic reticulum-Golgi intermediate compartment membrane. It localises to the melanosome. It is found in the endoplasmic reticulum membrane. Its subcellular location is the golgi apparatus membrane. The protein resides in the cytoplasmic vesicle. The protein localises to the secretory vesicle. It localises to the acrosome. It catalyses the reaction GTP + H2O = GDP + phosphate + H(+). Regulated by guanine nucleotide exchange factors (GEFs) which promote the exchange of bound GDP for free GTP, GTPase activating proteins (GAPs) which increase the GTP hydrolysis activity, and GDP dissociation inhibitors (GDIs) which inhibit the dissociation of the nucleotide from the GTPase. In terms of biological role, the small GTPases Rab are key regulators of intracellular membrane trafficking, from the formation of transport vesicles to their fusion with membranes. Rabs cycle between active GTP-bound and inactive GDP-bound states. In their active state, drive transport of vesicular carriers from donor organelles to acceptor organelles to regulate the membrane traffic that maintains organelle identity and morphology. RAB2A regulates autophagy by promoting autophagosome-lysosome fusion via recruitment of the HOPS endosomal tethering complex; this process involves autophagosomal RAB2A and lysosomal RAB39A recruitment of HOPS subcomplexes VPS39-VPS11 and VPS41-VPS16-VPS18-VPS33A, respectively, which assemble into a functional complex to mediate membrane tethering and SNAREs-driven membrane fusion. Required for protein transport from the endoplasmic reticulum to the Golgi complex. Regulates the compacted morphology of the Golgi. Together with RAB2B, redundantly required for efficient autophagic flux. In Gallus gallus (Chicken), this protein is Ras-related protein Rab-2A (RAB2A).